The primary structure comprises 367 residues: Histidinol-phosphate aminotransferase 1 (367 aa).

Lys229 carries the N6-(pyridoxal phosphate)lysine modification.

It belongs to the class-II pyridoxal-phosphate-dependent aminotransferase family. Histidinol-phosphate aminotransferase subfamily. In terms of assembly, homodimer. Pyridoxal 5'-phosphate is required as a cofactor.

It catalyses the reaction L-histidinol phosphate + 2-oxoglutarate = 3-(imidazol-4-yl)-2-oxopropyl phosphate + L-glutamate. The protein operates within amino-acid biosynthesis; L-histidine biosynthesis; L-histidine from 5-phospho-alpha-D-ribose 1-diphosphate: step 7/9. This chain is Histidinol-phosphate aminotransferase 1 (hisC1), found in Mesorhizobium japonicum (strain LMG 29417 / CECT 9101 / MAFF 303099) (Mesorhizobium loti (strain MAFF 303099)).